The following is a 219-amino-acid chain: 7-cyano-7-deazaguanine synthase (219 aa).

10 to 20 (FSGGQDSTTCL) is an ATP binding site. Zn(2+) contacts are provided by Cys-188, Cys-197, Cys-200, and Cys-203.

This sequence belongs to the QueC family. It depends on Zn(2+) as a cofactor.

The enzyme catalyses 7-carboxy-7-deazaguanine + NH4(+) + ATP = 7-cyano-7-deazaguanine + ADP + phosphate + H2O + H(+). Its pathway is purine metabolism; 7-cyano-7-deazaguanine biosynthesis. In terms of biological role, catalyzes the ATP-dependent conversion of 7-carboxy-7-deazaguanine (CDG) to 7-cyano-7-deazaguanine (preQ(0)). The protein is 7-cyano-7-deazaguanine synthase of Bacteroides fragilis (strain ATCC 25285 / DSM 2151 / CCUG 4856 / JCM 11019 / LMG 10263 / NCTC 9343 / Onslow / VPI 2553 / EN-2).